The following is a 543-amino-acid chain: Formate--tetrahydrofolate ligase (543 aa).

Position 54 to 61 (Thr-54 to Thr-61) interacts with ATP.

This sequence belongs to the formate--tetrahydrofolate ligase family.

The enzyme catalyses (6S)-5,6,7,8-tetrahydrofolate + formate + ATP = (6R)-10-formyltetrahydrofolate + ADP + phosphate. It participates in one-carbon metabolism; tetrahydrofolate interconversion. The polypeptide is Formate--tetrahydrofolate ligase (Thermus thermophilus (strain ATCC BAA-163 / DSM 7039 / HB27)).